Here is a 344-residue protein sequence, read N- to C-terminus: Cell division protein ZipA (344 aa).

Residues 1-6 (MEDLQL) lie on the Periplasmic side of the membrane. The chain crosses the membrane as a helical span at residues 7-27 (VLFVLGAIAIVAVLVHGFWSI). Topologically, residues 28–344 (RRQQPKSLKD…DYLHRIRANA (317 aa)) are cytoplasmic. Disordered regions lie at residues 75 to 94 (VRKASESQTPEAPAVNPYLK) and 108 to 139 (QFKQEPSMAQPDFSLQSPSVDEPHRGTKASRQ).

This sequence belongs to the ZipA family. Interacts with FtsZ via their C-terminal domains.

It localises to the cell inner membrane. In terms of biological role, essential cell division protein that stabilizes the FtsZ protofilaments by cross-linking them and that serves as a cytoplasmic membrane anchor for the Z ring. Also required for the recruitment to the septal ring of downstream cell division proteins. The polypeptide is Cell division protein ZipA (Shewanella oneidensis (strain ATCC 700550 / JCM 31522 / CIP 106686 / LMG 19005 / NCIMB 14063 / MR-1)).